The following is a 380-amino-acid chain: Cytochrome b (380 aa).

4 consecutive transmembrane segments (helical) span residues Phe33–Met53, Trp77–Val98, Trp113–Leu133, and Phe178–Leu198. His83 and His97 together coordinate heme b. 2 residues coordinate heme b: His182 and His196. Position 201 (His201) interacts with a ubiquinone. 4 helical membrane passes run Ile226 to Phe246, Leu288 to Asn308, Ile320 to Gly340, and Phe347 to Pro367.

It belongs to the cytochrome b family. The cytochrome bc1 complex contains 11 subunits: 3 respiratory subunits (MT-CYB, CYC1 and UQCRFS1), 2 core proteins (UQCRC1 and UQCRC2) and 6 low-molecular weight proteins (UQCRH/QCR6, UQCRB/QCR7, UQCRQ/QCR8, UQCR10/QCR9, UQCR11/QCR10 and a cleavage product of UQCRFS1). This cytochrome bc1 complex then forms a dimer. The cofactor is heme b.

The protein resides in the mitochondrion inner membrane. Its function is as follows. Component of the ubiquinol-cytochrome c reductase complex (complex III or cytochrome b-c1 complex) that is part of the mitochondrial respiratory chain. The b-c1 complex mediates electron transfer from ubiquinol to cytochrome c. Contributes to the generation of a proton gradient across the mitochondrial membrane that is then used for ATP synthesis. This Microryzomys minutus (Forest small rice rat) protein is Cytochrome b (MT-CYB).